The sequence spans 329 residues: DNA-directed RNA polymerase subunit alpha (329 aa).

The segment at 1–233 is alpha N-terminal domain (alpha-NTD); sequence MVREKVKVST…NLFIPFLHVE (233 aa). Positions 266–329 are alpha C-terminal domain (alpha-CTD); it reads TKELAFQYIF…KKILDILEKK (64 aa).

This sequence belongs to the RNA polymerase alpha chain family. In terms of assembly, in plastids the minimal PEP RNA polymerase catalytic core is composed of four subunits: alpha, beta, beta', and beta''. When a (nuclear-encoded) sigma factor is associated with the core the holoenzyme is formed, which can initiate transcription.

The protein resides in the plastid. It localises to the chloroplast. The catalysed reaction is RNA(n) + a ribonucleoside 5'-triphosphate = RNA(n+1) + diphosphate. In terms of biological role, DNA-dependent RNA polymerase catalyzes the transcription of DNA into RNA using the four ribonucleoside triphosphates as substrates. The protein is DNA-directed RNA polymerase subunit alpha of Arabidopsis thaliana (Mouse-ear cress).